The following is a 153-amino-acid chain: UPF0756 membrane protein LCA_1031 (153 aa).

Transmembrane regions (helical) follow at residues 4-24 (WLFL…SLII), 52-72 (WGVT…QIGF), 85-105 (FIAV…VGLL), and 115-135 (LVFG…GPVI).

This sequence belongs to the UPF0756 family.

Its subcellular location is the cell membrane. The sequence is that of UPF0756 membrane protein LCA_1031 from Latilactobacillus sakei subsp. sakei (strain 23K) (Lactobacillus sakei subsp. sakei).